A 552-amino-acid chain; its full sequence is Pyrophosphate--fructose 6-phosphate 1-phosphotransferase subunit beta (552 aa).

A diphosphate-binding site is contributed by Gly-90. Asp-184 is a binding site for Mg(2+). Residues Thr-212–Asp-214, Lys-251–Tyr-252, Met-259–Arg-261, Glu-320, and Tyr-425–Arg-428 each bind substrate. Residue Asp-214 is the Proton acceptor of the active site.

This sequence belongs to the phosphofructokinase type A (PFKA) family. PPi-dependent PFK group II subfamily. Clade 'Long' sub-subfamily. As to quaternary structure, tetramer of two alpha (regulatory) and two beta (catalytic) chains. The cofactor is Mg(2+).

The protein resides in the cytoplasm. It catalyses the reaction beta-D-fructose 6-phosphate + diphosphate = beta-D-fructose 1,6-bisphosphate + phosphate + H(+). Its pathway is carbohydrate degradation; glycolysis; D-glyceraldehyde 3-phosphate and glycerone phosphate from D-glucose: step 3/4. With respect to regulation, allosterically activated by fructose 2,6-bisphosphate. In terms of biological role, catalytic subunit of pyrophosphate--fructose 6-phosphate 1-phosphotransferase. Catalyzes the phosphorylation of D-fructose 6-phosphate, the first committing step of glycolysis. Uses inorganic phosphate (PPi) as phosphoryl donor instead of ATP like common ATP-dependent phosphofructokinases (ATP-PFKs), which renders the reaction reversible, and can thus function both in glycolysis and gluconeogenesis. This is Pyrophosphate--fructose 6-phosphate 1-phosphotransferase subunit beta from Ricinus communis (Castor bean).